The sequence spans 427 residues: Serine--tRNA ligase (427 aa).

Thr-231–Glu-233 lines the L-serine pocket. Arg-262–Glu-264 serves as a coordination point for ATP. Glu-285 contributes to the L-serine binding site. Glu-349 to Ser-352 lines the ATP pocket. Ser-385 contributes to the L-serine binding site.

It belongs to the class-II aminoacyl-tRNA synthetase family. Type-1 seryl-tRNA synthetase subfamily. As to quaternary structure, homodimer. The tRNA molecule binds across the dimer.

Its subcellular location is the cytoplasm. It catalyses the reaction tRNA(Ser) + L-serine + ATP = L-seryl-tRNA(Ser) + AMP + diphosphate + H(+). The enzyme catalyses tRNA(Sec) + L-serine + ATP = L-seryl-tRNA(Sec) + AMP + diphosphate + H(+). It participates in aminoacyl-tRNA biosynthesis; selenocysteinyl-tRNA(Sec) biosynthesis; L-seryl-tRNA(Sec) from L-serine and tRNA(Sec): step 1/1. Catalyzes the attachment of serine to tRNA(Ser). Is also able to aminoacylate tRNA(Sec) with serine, to form the misacylated tRNA L-seryl-tRNA(Sec), which will be further converted into selenocysteinyl-tRNA(Sec). This is Serine--tRNA ligase from Allorhizobium ampelinum (strain ATCC BAA-846 / DSM 112012 / S4) (Agrobacterium vitis (strain S4)).